The primary structure comprises 37 residues: Large ribosomal subunit protein bL36 (37 aa).

This sequence belongs to the bacterial ribosomal protein bL36 family.

In Marinobacter nauticus (strain ATCC 700491 / DSM 11845 / VT8) (Marinobacter aquaeolei), this protein is Large ribosomal subunit protein bL36.